Consider the following 569-residue polypeptide: Urease subunit beta (569 aa).

Residues 131–569 (GGIDTHIHFI…VSLAQLFSIF (439 aa)) form the Urease domain. Histidine 136, histidine 138, and lysine 219 together coordinate Ni(2+). N6-carboxylysine is present on lysine 219. A substrate-binding site is contributed by histidine 221. Residues histidine 248 and histidine 274 each contribute to the Ni(2+) site. Histidine 322 functions as the Proton donor in the catalytic mechanism. Ni(2+) is bound at residue aspartate 362.

It belongs to the metallo-dependent hydrolases superfamily. Urease alpha subunit family. As to quaternary structure, heterohexamer of 3 UreA (alpha) and 3 UreB (beta) subunits. Ni cation is required as a cofactor. In terms of processing, carboxylation allows a single lysine to coordinate two nickel ions.

It localises to the cytoplasm. The catalysed reaction is urea + 2 H2O + H(+) = hydrogencarbonate + 2 NH4(+). It participates in nitrogen metabolism; urea degradation; CO(2) and NH(3) from urea (urease route): step 1/1. The protein is Urease subunit beta of Helicobacter pylori (strain Shi470).